A 354-amino-acid chain; its full sequence is MPFFSYDTVKKILFNFDPETAHTLAGIGLRALPCCPPLLHFITKQYFVTDPMIEQEFFGRTFKNPVGLGAGFDKNGQYITSMPALGFGFTEIGTVTPKPQPGNPKPRLFRLLEDRSIQNAMGFNNRGMGYMLEQLNKLYFFDYPIGINIGKNKVTSEEKALEDYETLFHAFKDYGDYIVINISSPNTPGLRDLQNEQFIKDIFAMAKRITEQPVLLKIAPDMTHEDAIALCNTAVDAGAAGIIATNTTIDYSLTPHAKDFGGISGALLTEKSYQLFKAIGKELYGKTLLISVGGIDSAEEAYRRIKAGASLVQVYSMLIYKGPALIREINEGLIKLLKKDGYTHISEAIGADWK.

FMN contacts are provided by residues 70–74 and threonine 94; that span reads AGFDK. Lysine 74 lines the substrate pocket. Position 119–123 (119–123) interacts with substrate; the sequence is NAMGF. Residues asparagine 148 and asparagine 181 each contribute to the FMN site. Asparagine 181 provides a ligand contact to substrate. The active-site Nucleophile is the serine 184. Asparagine 186 is a substrate binding site. Lysine 217 and threonine 245 together coordinate FMN. 246–247 provides a ligand contact to substrate; it reads NT. Residues glycine 265, glycine 294, and 315–316 each bind FMN; that span reads YS.

The protein belongs to the dihydroorotate dehydrogenase family. Type 2 subfamily. In terms of assembly, monomer. FMN serves as cofactor.

The protein resides in the cell membrane. The catalysed reaction is (S)-dihydroorotate + a quinone = orotate + a quinol. It participates in pyrimidine metabolism; UMP biosynthesis via de novo pathway; orotate from (S)-dihydroorotate (quinone route): step 1/1. Its function is as follows. Catalyzes the conversion of dihydroorotate to orotate with quinone as electron acceptor. The polypeptide is Dihydroorotate dehydrogenase (quinone) (Sulfurovum sp. (strain NBC37-1)).